We begin with the raw amino-acid sequence, 768 residues long: Pentatricopeptide repeat-containing protein At4g01030, mitochondrial (768 aa).

The N-terminal 25 residues, 1 to 25 (MYRFLGLTIHGGLIKRGLDNSDTRV), are a transit peptide targeting the mitochondrion. PPR repeat units lie at residues 22–52 (DTRV…MPKR), 53–87 (DDLA…GAKA), 88–122 (YDST…GLES), 123–153 (NVSM…MKDR), 154–188 (NLSS…GLKP), 189–223 (DIVT…GLKP), 224–254 (STSS…ILRN), 259–289 (DVYV…MDAK), 290–324 (NIVA…GIKP), 325–359 (DAIT…GVAP), 360–394 (NVVS…GVGP), 395–429 (NAAT…NLIC), 430–460 (DAYV…IKNK), 461–495 (SLAS…GMEP), 496–526 (DAIT…MRSR), and 532–562 (TIEH…MSLK). The tract at residues 567 to 642 (IWGAFLSSCK…QDLWSWIQID (76 aa)) is type E motif. Positions 643–673 (QTVHIFYAEGKTHPDEGDIYFELYKLVSEMK) are type E(+) motif. The type DYW motif stretch occupies residues 674-768 (KSGYVPDTSC…DGKCSCNDSW (95 aa)).

This sequence belongs to the PPR family. PCMP-H subfamily.

Its subcellular location is the mitochondrion. The chain is Pentatricopeptide repeat-containing protein At4g01030, mitochondrial (PCMP-H65) from Arabidopsis thaliana (Mouse-ear cress).